Consider the following 245-residue polypeptide: Ribonuclease 3 (245 aa).

An RNase III domain is found at 24–146 (YAVFLQKLGY…IIGAIYLESG (123 aa)). E59 serves as a coordination point for Mg(2+). The active site involves D63. Residues N132 and E135 each coordinate Mg(2+). E135 is an active-site residue. The 71-residue stretch at 173–243 (DSKTLLQEYL…ARQAYELAIV (71 aa)) folds into the DRBM domain.

It belongs to the ribonuclease III family. In terms of assembly, homodimer. It depends on Mg(2+) as a cofactor.

The protein localises to the cytoplasm. It catalyses the reaction Endonucleolytic cleavage to 5'-phosphomonoester.. In terms of biological role, digests double-stranded RNA. Involved in the processing of primary rRNA transcript to yield the immediate precursors to the large and small rRNAs (23S and 16S). Processes some mRNAs, and tRNAs when they are encoded in the rRNA operon. Processes pre-crRNA and tracrRNA of type II CRISPR loci if present in the organism. The polypeptide is Ribonuclease 3 (Nitrosomonas europaea (strain ATCC 19718 / CIP 103999 / KCTC 2705 / NBRC 14298)).